The sequence spans 170 residues: Photosystem II extrinsic protein V (170 aa).

Residues 1 to 33 (MVSVFSSLRQSFKGLLVLVPVLIGLAFISPAEA) form the signal peptide. Residues C70, C73, H74, and M137 each coordinate heme c.

This sequence belongs to the cytochrome c family. PsbV subfamily. As to quaternary structure, PSII is composed of 1 copy each of membrane proteins PsbA, PsbB, PsbC, PsbD, PsbE, PsbF, PsbH, PsbI, PsbJ, PsbK, PsbL, PsbM, PsbT, PsbX, PsbY, PsbZ, Psb30/Ycf12, peripheral proteins PsbO, CyanoQ (PsbQ), PsbU, PsbV and a large number of cofactors. It forms dimeric complexes. Heme c is required as a cofactor.

It is found in the cellular thylakoid membrane. Functionally, one of the extrinsic, lumenal subunits of photosystem II (PSII). PSII is a light-driven water plastoquinone oxidoreductase, using light energy to abstract electrons from H(2)O, generating a proton gradient subsequently used for ATP formation. The extrinsic proteins stabilize the structure of photosystem II oxygen-evolving complex (OEC), the ion environment of oxygen evolution and protect the OEC against heat-induced inactivation. Low-potential cytochrome c that plays a role in the OEC of PSII. In Synechococcus sp. (strain CC9902), this protein is Photosystem II extrinsic protein V.